We begin with the raw amino-acid sequence, 472 residues long: Carbohydrate sulfotransferase 3 (472 aa).

Residues 1–19 are Cytoplasmic-facing; that stretch reads MEKGLALPQDFRDLVHSLK. The chain crosses the membrane as a helical; Signal-anchor for type II membrane protein span at residues 20–38; it reads IRGRYVLFLAFVVIVFIFI. Residues 39 to 472 are Lumenal-facing; it reads EKENKIISRV…LEERGTFWVT (434 aa). N-linked (GlcNAc...) asparagine glycans are attached at residues N63, N74, and N96. 135–141 lines the 3'-phosphoadenylyl sulfate pocket; sequence TRTGSSF. A glycan (N-linked (GlcNAc...) asparagine) is linked at N250. 295 to 303 provides a ligand contact to 3'-phosphoadenylyl sulfate; the sequence is RDPRAVLAS. 2 N-linked (GlcNAc...) asparagine glycosylation sites follow: N413 and N457.

This sequence belongs to the sulfotransferase 1 family. Gal/GlcNAc/GalNAc subfamily. In terms of processing, N-glycosylated. In terms of tissue distribution, widely expressed. Highly expressed in spleen, lung, eye and stomach. Constitutively expressed at low level during the mid- to late-gestation period. Expressed in the brain in a temporally controlled manner: peaks at 2 weeks after birth in the cerebellum, but at 3 weeks in the cerebrum. Localizes to stromal cells in the bone marrow, and stromal cells in the marginal zone and red pulp of the spleen, but the sense probe did not.

It is found in the golgi apparatus membrane. It catalyses the reaction chondroitin beta-D-glucuronate + n 3'-phosphoadenylyl sulfate = chondroitin 6'-sulfate + n adenosine 3',5'-bisphosphate + n H(+). It carries out the reaction 3'-phosphoadenylyl sulfate + keratan = adenosine 3',5'-bisphosphate + keratan 6'-sulfate.. Sulfotransferase that utilizes 3'-phospho-5'-adenylyl sulfate (PAPS) as sulfonate donor to catalyze the transfer of sulfate to position 6 of the N-acetylgalactosamine (GalNAc) residue of chondroitin. Chondroitin sulfate constitutes the predominant proteoglycan present in cartilage and is distributed on the surfaces of many cells and extracellular matrices. Catalyzes with a lower efficiency the sulfation of Gal residues of keratan sulfate, another glycosaminoglycan. Can also catalyze the sulfation of the Gal residues in sialyl N-acetyllactosamine (sialyl LacNAc) oligosaccharides. May play a role in the maintenance of naive T-lymphocytes in the spleen. The sequence is that of Carbohydrate sulfotransferase 3 (Chst3) from Mus musculus (Mouse).